Here is a 355-residue protein sequence, read N- to C-terminus: Heat-inducible transcription repressor HrcA (355 aa).

It belongs to the HrcA family.

Its function is as follows. Negative regulator of class I heat shock genes (grpE-dnaK-dnaJ and groELS operons). Prevents heat-shock induction of these operons. This Nitratidesulfovibrio vulgaris (strain DP4) (Desulfovibrio vulgaris) protein is Heat-inducible transcription repressor HrcA.